We begin with the raw amino-acid sequence, 312 residues long: DNA-directed RNA polymerase subunit alpha (312 aa).

An alpha N-terminal domain (alpha-NTD) region spans residues 1-226; the sequence is MIEFEKPNIT…EHFKVFESAD (226 aa). The segment at 243 to 312 is alpha C-terminal domain (alpha-CTD); sequence KEKKLEMTIE…DLGLSLRQED (70 aa).

Belongs to the RNA polymerase alpha chain family. In terms of assembly, homodimer. The RNAP catalytic core consists of 2 alpha, 1 beta, 1 beta' and 1 omega subunit. When a sigma factor is associated with the core the holoenzyme is formed, which can initiate transcription.

The enzyme catalyses RNA(n) + a ribonucleoside 5'-triphosphate = RNA(n+1) + diphosphate. DNA-dependent RNA polymerase catalyzes the transcription of DNA into RNA using the four ribonucleoside triphosphates as substrates. This Lactobacillus acidophilus (strain ATCC 700396 / NCK56 / N2 / NCFM) protein is DNA-directed RNA polymerase subunit alpha.